The following is a 146-amino-acid chain: Ribosome-binding factor A (146 aa).

A disordered region spans residues 125-146; that stretch reads RDLDADDDKTKDDRAKDDKDSE.

It belongs to the RbfA family. Monomer. Binds 30S ribosomal subunits, but not 50S ribosomal subunits or 70S ribosomes.

The protein resides in the cytoplasm. In terms of biological role, one of several proteins that assist in the late maturation steps of the functional core of the 30S ribosomal subunit. Associates with free 30S ribosomal subunits (but not with 30S subunits that are part of 70S ribosomes or polysomes). Required for efficient processing of 16S rRNA. May interact with the 5'-terminal helix region of 16S rRNA. This Mesorhizobium japonicum (strain LMG 29417 / CECT 9101 / MAFF 303099) (Mesorhizobium loti (strain MAFF 303099)) protein is Ribosome-binding factor A.